The primary structure comprises 446 residues: Rhamnogalacturonase A (446 aa).

An N-terminal signal peptide occupies residues 1–18 (MPALPILALALAPLLVNG). A disulfide bridge links C39 with C65. N-linked (GlcNAc...) asparagine glycosylation is found at N50, N115, and N124. The active-site Proton donor is D216. C218 and C235 are joined by a disulfide. Residues N236, N281, and N318 are each glycosylated (N-linked (GlcNAc...) asparagine). 2 disulfide bridges follow: C341/C347 and C369/C378.

Belongs to the glycosyl hydrolase 28 family.

The protein localises to the secreted. It catalyses the reaction Endohydrolysis of alpha-D-GalA-(1-&gt;2)-alpha-L-Rha glycosidic bond in the rhamnogalacturonan I backbone with initial inversion of anomeric configuration releasing oligosaccharides with beta-D-GalA at the reducing end.. Functionally, pectinolytic enzymes consist of four classes of enzymes: pectine lyase, polygalacturonase, pectin methylesterase and rhamnogalacturonase. Hydrolyzes alpha-D-galacturonopyranosyl-(1,2)-alpha-L-rhamnopyranosyl linkages in the backbone of the hairy regions of pectins. This Aspergillus niger protein is Rhamnogalacturonase A (rhgA).